The chain runs to 328 residues: 4-hydroxy-3-methylbut-2-enyl diphosphate reductase (328 aa).

Position 24 (Cys24) interacts with [4Fe-4S] cluster. (2E)-4-hydroxy-3-methylbut-2-enyl diphosphate is bound by residues His55 and His88. Residues His55 and His88 each contribute to the dimethylallyl diphosphate site. 2 residues coordinate isopentenyl diphosphate: His55 and His88. Cys110 lines the [4Fe-4S] cluster pocket. His138 serves as a coordination point for (2E)-4-hydroxy-3-methylbut-2-enyl diphosphate. His138 serves as a coordination point for dimethylallyl diphosphate. His138 serves as a coordination point for isopentenyl diphosphate. The Proton donor role is filled by Glu140. Position 178 (Thr178) interacts with (2E)-4-hydroxy-3-methylbut-2-enyl diphosphate. Residue Cys208 coordinates [4Fe-4S] cluster. Positions 236, 237, 238, and 279 each coordinate (2E)-4-hydroxy-3-methylbut-2-enyl diphosphate. Dimethylallyl diphosphate is bound by residues Ser236, Ser237, Asn238, and Ser279. 4 residues coordinate isopentenyl diphosphate: Ser236, Ser237, Asn238, and Ser279.

It belongs to the IspH family. The cofactor is [4Fe-4S] cluster.

It carries out the reaction isopentenyl diphosphate + 2 oxidized [2Fe-2S]-[ferredoxin] + H2O = (2E)-4-hydroxy-3-methylbut-2-enyl diphosphate + 2 reduced [2Fe-2S]-[ferredoxin] + 2 H(+). The enzyme catalyses dimethylallyl diphosphate + 2 oxidized [2Fe-2S]-[ferredoxin] + H2O = (2E)-4-hydroxy-3-methylbut-2-enyl diphosphate + 2 reduced [2Fe-2S]-[ferredoxin] + 2 H(+). It participates in isoprenoid biosynthesis; dimethylallyl diphosphate biosynthesis; dimethylallyl diphosphate from (2E)-4-hydroxy-3-methylbutenyl diphosphate: step 1/1. It functions in the pathway isoprenoid biosynthesis; isopentenyl diphosphate biosynthesis via DXP pathway; isopentenyl diphosphate from 1-deoxy-D-xylulose 5-phosphate: step 6/6. In terms of biological role, catalyzes the conversion of 1-hydroxy-2-methyl-2-(E)-butenyl 4-diphosphate (HMBPP) into a mixture of isopentenyl diphosphate (IPP) and dimethylallyl diphosphate (DMAPP). Acts in the terminal step of the DOXP/MEP pathway for isoprenoid precursor biosynthesis. This chain is 4-hydroxy-3-methylbut-2-enyl diphosphate reductase, found in Ehrlichia ruminantium (strain Gardel).